The sequence spans 412 residues: Propionate kinase (412 aa).

Belongs to the acetokinase family. PduW subfamily.

It is found in the cytoplasm. The enzyme catalyses propanoate + ATP = propanoyl phosphate + ADP. The protein operates within polyol metabolism; 1,2-propanediol degradation. Its function is as follows. Works with phosphate acetyltransferase (pta) to capture exogenous propionate and regenerate propionyl-CoA during degradation of 1,2-propanediol (1,2-PD). The sequence is that of Propionate kinase from Yersinia enterocolitica serotype O:8 / biotype 1B (strain NCTC 13174 / 8081).